The chain runs to 397 residues: Tryptophan synthase beta chain (397 aa).

Lysine 87 carries the N6-(pyridoxal phosphate)lysine modification.

Belongs to the TrpB family. Tetramer of two alpha and two beta chains. Requires pyridoxal 5'-phosphate as cofactor.

The catalysed reaction is (1S,2R)-1-C-(indol-3-yl)glycerol 3-phosphate + L-serine = D-glyceraldehyde 3-phosphate + L-tryptophan + H2O. Its pathway is amino-acid biosynthesis; L-tryptophan biosynthesis; L-tryptophan from chorismate: step 5/5. Its function is as follows. The beta subunit is responsible for the synthesis of L-tryptophan from indole and L-serine. This Enterobacter sp. (strain 638) protein is Tryptophan synthase beta chain.